We begin with the raw amino-acid sequence, 432 residues long: Serine/threonine-protein kinase stk11 (432 aa).

The region spanning 52–312 (YLMGDLLGEG…IQQIRQHNWF (261 aa)) is the Protein kinase domain. Residues 58-66 (LGEGSYGKV) and lysine 81 each bind ATP. The Proton acceptor role is filled by aspartate 179. Threonine 192 is subject to Phosphothreonine; by autocatalysis. The segment at 398-432 (TESQLKTERRVSSSSQRKASTTGSKVRKLSACKQQ) is disordered. The span at 409 to 421 (SSSSQRKASTTGS) shows a compositional bias: polar residues. Residues 422-432 (KVRKLSACKQQ) are compositionally biased toward basic residues. Serine 427 is modified (phosphoserine; by PKA).

The protein belongs to the protein kinase superfamily. CAMK Ser/Thr protein kinase family. LKB1 subfamily. As to quaternary structure, catalytic component of a trimeric complex composed of STK11/LKB1, STRAD (STRADA or STRADB) and CAB39/MO25 (CAB39/MO25alpha or CAB39L/MO25beta). Mg(2+) is required as a cofactor. It depends on Mn(2+) as a cofactor. Post-translationally, phosphorylated by a cAMP-dependent protein kinase. Autophosphorylated in a reaction that prefers Mn(2+) to Mg(2+). As to expression, oocytes, eggs and early embryos.

It localises to the nucleus. The protein localises to the cytoplasm. It carries out the reaction L-seryl-[protein] + ATP = O-phospho-L-seryl-[protein] + ADP + H(+). It catalyses the reaction L-threonyl-[protein] + ATP = O-phospho-L-threonyl-[protein] + ADP + H(+). Its function is as follows. Tumor suppressor serine/threonine-protein kinase that controls the activity of AMP-activated protein kinase (AMPK) family members, thereby playing a role in various processes such as cell metabolism, cell polarity, apoptosis and DNA damage response. Acts by phosphorylating the T-loop of AMPK family proteins, leading to promote their activity. The polypeptide is Serine/threonine-protein kinase stk11 (Xenopus laevis (African clawed frog)).